The primary structure comprises 215 residues: Pyridoxine/pyridoxamine 5'-phosphate oxidase (215 aa).

Residues 8-11 and K66 each bind substrate; that span reads RQEY. Residues 61-66, 76-77, R82, K83, and Q105 each bind FMN; these read RIVLLK and YT. Substrate contacts are provided by Y123 and R127. FMN is bound by residues 140–141 and W186; that span reads QS. 192-194 contacts substrate; that stretch reads RLH. R196 contacts FMN.

Belongs to the pyridoxamine 5'-phosphate oxidase family. As to quaternary structure, homodimer. The cofactor is FMN.

It catalyses the reaction pyridoxamine 5'-phosphate + O2 + H2O = pyridoxal 5'-phosphate + H2O2 + NH4(+). It carries out the reaction pyridoxine 5'-phosphate + O2 = pyridoxal 5'-phosphate + H2O2. The protein operates within cofactor metabolism; pyridoxal 5'-phosphate salvage; pyridoxal 5'-phosphate from pyridoxamine 5'-phosphate: step 1/1. It participates in cofactor metabolism; pyridoxal 5'-phosphate salvage; pyridoxal 5'-phosphate from pyridoxine 5'-phosphate: step 1/1. Its function is as follows. Catalyzes the oxidation of either pyridoxine 5'-phosphate (PNP) or pyridoxamine 5'-phosphate (PMP) into pyridoxal 5'-phosphate (PLP). This chain is Pyridoxine/pyridoxamine 5'-phosphate oxidase, found in Salinibacter ruber (strain DSM 13855 / M31).